Here is a 203-residue protein sequence, read N- to C-terminus: Small ribosomal subunit protein uS4 (203 aa).

The tract at residues 15 to 46 (LGENIWGRPKSSVNRRSYGPGQHGQRRKSKVS) is disordered. Residues 94 to 154 (QRLDMVVYRA…KKAKEMALIA (61 aa)) form the S4 RNA-binding domain.

This sequence belongs to the universal ribosomal protein uS4 family. In terms of assembly, part of the 30S ribosomal subunit. Contacts protein S5. The interaction surface between S4 and S5 is involved in control of translational fidelity.

Functionally, one of the primary rRNA binding proteins, it binds directly to 16S rRNA where it nucleates assembly of the body of the 30S subunit. With S5 and S12 plays an important role in translational accuracy. The polypeptide is Small ribosomal subunit protein uS4 (Novosphingobium aromaticivorans (strain ATCC 700278 / DSM 12444 / CCUG 56034 / CIP 105152 / NBRC 16084 / F199)).